The primary structure comprises 354 residues: Peroxisomal membrane protein PEX32 (354 aa).

A run of 5 helical transmembrane segments spans residues 24–44 (LLNMPPVITTALYTAFPVIFL), 63–83 (FIAIAIYIMVVKYWTVVACTV), 84–104 (LPTIIALGTCASLWFLKTTID), 151–171 (GFSLIAITPCYIWLMTRIFTV), and 173–193 (SFLLVFGVAWLSFHSSWSVAT). An N-linked (GlcNAc...) asparagine glycan is attached at asparagine 319.

This sequence belongs to the PEX28-32 family. PEX30/31 subfamily.

The protein localises to the peroxisome membrane. It is found in the endoplasmic reticulum membrane. Its function is as follows. With PEX24, contributes to tethering of peroxisomes to the endoplasmic reticulum for organelle biogenesis, positioning and segregation. In Ogataea parapolymorpha (strain ATCC 26012 / BCRC 20466 / JCM 22074 / NRRL Y-7560 / DL-1) (Yeast), this protein is Peroxisomal membrane protein PEX32.